We begin with the raw amino-acid sequence, 441 residues long: Xylose isomerase (441 aa).

Active-site residues include histidine 100 and aspartate 103. The Mg(2+) site is built by glutamate 231, glutamate 267, histidine 270, aspartate 295, aspartate 306, aspartate 308, and aspartate 338.

The protein belongs to the xylose isomerase family. As to quaternary structure, homotetramer. Mg(2+) is required as a cofactor.

Its subcellular location is the cytoplasm. The enzyme catalyses alpha-D-xylose = alpha-D-xylulofuranose. In Paraburkholderia phymatum (strain DSM 17167 / CIP 108236 / LMG 21445 / STM815) (Burkholderia phymatum), this protein is Xylose isomerase.